Consider the following 1093-residue polypeptide: Semaphorin 5c (1093 aa).

The N-terminal stretch at 1 to 34 (MNMLILKLPKMFSQLWLLLILSLLTLEGPQPSTG) is a signal peptide. Asn-48 is a glycosylation site (N-linked (GlcNAc...) asparagine). A Sema domain is found at 50 to 495 (SRYISYQDLM…TDLALTRIPA (446 aa)). Disulfide bonds link Cys-118/Cys-128 and Cys-146/Cys-155. N-linked (GlcNAc...) asparagine glycosylation is found at Asn-162, Asn-182, Asn-285, and Asn-295. 2 disulfide bridges follow: Cys-271/Cys-376 and Cys-296/Cys-338. N-linked (GlcNAc...) asparagine glycosylation occurs at Asn-341. The PSI domain maps to 497–546 (HCSRHVSQSSCLNSMDPYCGWNELVERCMPQPQDSSVLQHWHQAPQITCP). TSP type-1 domains lie at 553-605 (DGGW…TNCT), 607-663 (HGGW…PPCP), and 671-726 (DGGW…QSCQ). Residue Asn-603 is glycosylated (N-linked (GlcNAc...) asparagine). 6 disulfide bridges follow: Cys-619–Cys-656, Cys-623–Cys-662, Cys-634–Cys-646, Cys-683–Cys-720, Cys-687–Cys-725, and Cys-698–Cys-710. Residue Asn-745 is glycosylated (N-linked (GlcNAc...) asparagine). TSP type-1 domains follow at residues 794 to 834 (DSAD…HACP), 850 to 901 (HGEW…VPCE), and 904 to 953 (LGWS…NECE). 3 disulfide bridges follow: Cys-862–Cys-895, Cys-866–Cys-900, and Cys-877–Cys-885. Residues 960–980 (TATLPIVIFVGLLFTVACCLA) traverse the membrane as a helical segment. Residues Asn-998 and Asn-1046 are each glycosylated (N-linked (GlcNAc...) asparagine). The segment at 1018–1056 (PTKDYYDQRPKRQSSFRMPAKTSNLGNGNGTLNRNNMHQ) is disordered. The span at 1041 to 1053 (NLGNGNGTLNRNN) shows a compositional bias: low complexity.

This sequence belongs to the semaphorin family. As to expression, in egg chambers, high levels of expression in the follicle cells, with little to no expression in the germ cells (at protein level). In stage 3 to 7 egg chambers, planar polarized at the basal epithelial surface (at protein level).

It is found in the apical cell membrane. The protein localises to the lateral cell membrane. Its subcellular location is the endosome. Functionally, regulates the motility of migrating epithelial cells by providing guidance cues within the migratory environment and may also play a role in development of the olfactory system. May act as a positive axonal guidance cue. Function in neurons is essential for adult survival and is important for climbing behavior. Promotes collective migration of follicular epithelial cells in egg chambers, likely by acting at the leading edge of the basal epithelium cells to provide guidance cues across the cell boundary to the trailing edge of the cell ahead. The transmembrane receptor PlexA on the trailing edge of the cell ahead, appears to transduce this signal to suppress the formation of protrusions. Involved in olfactory avoidance behavior. This chain is Semaphorin 5c, found in Drosophila melanogaster (Fruit fly).